We begin with the raw amino-acid sequence, 1420 residues long: DNA-directed RNA polymerase subunit beta' (1420 aa).

Residues cysteine 70, cysteine 72, cysteine 85, and cysteine 88 each coordinate Zn(2+). Residues aspartate 464, aspartate 466, and aspartate 468 each contribute to the Mg(2+) site. Positions 823, 897, 904, and 907 each coordinate Zn(2+).

Belongs to the RNA polymerase beta' chain family. The RNAP catalytic core consists of 2 alpha, 1 beta, 1 beta' and 1 omega subunit. When a sigma factor is associated with the core the holoenzyme is formed, which can initiate transcription. Mg(2+) is required as a cofactor. Zn(2+) serves as cofactor.

It carries out the reaction RNA(n) + a ribonucleoside 5'-triphosphate = RNA(n+1) + diphosphate. In terms of biological role, DNA-dependent RNA polymerase catalyzes the transcription of DNA into RNA using the four ribonucleoside triphosphates as substrates. The protein is DNA-directed RNA polymerase subunit beta' of Polynucleobacter asymbioticus (strain DSM 18221 / CIP 109841 / QLW-P1DMWA-1) (Polynucleobacter necessarius subsp. asymbioticus).